The sequence spans 430 residues: Adenylosuccinate synthetase (430 aa).

Residues 12–18 and 40–42 each bind GTP; these read GDEGKGK and GHT. The active-site Proton acceptor is aspartate 13. The Mg(2+) site is built by aspartate 13 and glycine 40. Residues 13–16, 38–41, threonine 128, arginine 142, glutamine 223, threonine 238, and arginine 302 contribute to the IMP site; these read DEGK and NAGH. Histidine 41 (proton donor) is an active-site residue. 298–304 is a substrate binding site; it reads TTTGRPR. GTP is bound by residues arginine 304, 330 to 332, and 412 to 414; these read SID and SVG.

It belongs to the adenylosuccinate synthetase family. As to quaternary structure, homodimer. Requires Mg(2+) as cofactor.

It localises to the cytoplasm. It carries out the reaction IMP + L-aspartate + GTP = N(6)-(1,2-dicarboxyethyl)-AMP + GDP + phosphate + 2 H(+). It participates in purine metabolism; AMP biosynthesis via de novo pathway; AMP from IMP: step 1/2. Functionally, plays an important role in the de novo pathway of purine nucleotide biosynthesis. Catalyzes the first committed step in the biosynthesis of AMP from IMP. This chain is Adenylosuccinate synthetase, found in Streptococcus pyogenes serotype M49 (strain NZ131).